The following is a 939-amino-acid chain: Progesterone receptor (939 aa).

The span at 1–11 (MTERTGKDARA) shows a compositional bias: basic and acidic residues. The AF3; mediates transcriptional activation (in isoform B) stretch occupies residues 1–174 (MTERTGKDAR…RSSQGAACPL (174 aa)). The interval 1–302 (MTERTGKDAR…AEQDAPAPGC (302 aa)) is disordered. Residues 1–572 (MTERTGKDAR…YSFESLPQKI (572 aa)) are modulating, Ala/Pro-rich. A Glycyl lysine isopeptide (Lys-Gly) (interchain with G-Cter in SUMO) cross-link involves residue lysine 7. Positions 15 to 26 (AGGAPSPAPAAE) are enriched in low complexity. The residue at position 20 (serine 20) is a Phosphoserine. Residues 27 to 36 (PESRRRDGGR) show a composition bias toward basic and acidic residues. Residues 49–67 (AAAAAAAAAAASAAPSAPS) are compositionally biased toward low complexity. Serine 141 is subject to Phosphoserine. A mediates transcriptional transrepression (in isoform A) region spans residues 175–314 (MSRPEGKAGD…LATTMMDFIH (140 aa)). The Nuclear localization signal signature appears at 193–197 (KGPPR). Serine 200 is subject to Phosphoserine. Composition is skewed to low complexity over residues 211–230 (GAHAWPGAAGKAATQPAALG) and 257–278 (PAAAAGAAPAAPGTAPGGTAPV). Serine 303 is modified (phosphoserine; by MAPK1). Serine 349 bears the Phosphoserine; by MAPK mark. A Glycyl lysine isopeptide (Lys-Gly) (interchain with G-Cter in SUMO); alternate cross-link involves residue lysine 392. Residue lysine 392 forms a Glycyl lysine isopeptide (Lys-Gly) (interchain with G-Cter in ubiquitin); alternate linkage. The residue at position 404 (serine 404) is a Phosphoserine; by CDK2. The segment at 463-552 (PALECVLYKA…VYQPYLNYLR (90 aa)) is AF1; mediates transcriptional activation. Residue lysine 537 forms a Glycyl lysine isopeptide (Lys-Gly) (interchain with G-Cter in SUMO) linkage. 2 consecutive NR C4-type zinc fingers follow at residues 573-593 (CLICGDEASGCHYGVLTCGSC) and 609-633 (CAGRNDCIVDKIRRKNCPACRLRKC). The segment at residues 573 to 645 (CLICGDEASG…AGMVLGGRKF (73 aa)) is a DNA-binding region (nuclear receptor). The residue at position 682 (serine 682) is a Phosphoserine. In terms of domain architecture, NR LBD spans 685–919 (QDIQLIPPLI…EFPEMMSEVI (235 aa)). Residues 693-939 (LINLLMSIEP…MVKPLLFHKK (247 aa)) form an AF2; mediates transcriptional activation region.

Belongs to the nuclear hormone receptor family. NR3 subfamily. As to quaternary structure, interacts with SMARD1 and UNC45A. Interacts with CUEDC2; the interaction promotes ubiquitination, decreases sumoylation, and represses transcriptional activity. Interacts with PIAS3; the interaction promotes sumoylation of PR in a hormone-dependent manner, inhibits DNA-binding, and alters nuclear export. Interacts with SP1; the interaction requires ligand-induced phosphorylation on Ser-349 by ERK1/2-MAPK. Interacts with PRMT2. Isoform A interacts with NCOR2. Isoform B (but not isoform A) interacts with NCOA2 and NCOA1. Isoform B (but not isoform A) interacts with KLF9. Interacts with GTF2B. In terms of processing, phosphorylated on multiple serine sites. Several of these sites are hormone-dependent. Phosphorylation on Ser-303 occurs preferentially on isoform B, is highly hormone-dependent and modulates ubiquitination and sumoylation on Lys-392. Phosphorylation on Ser-303 and Ser-349 also requires induction by hormone. Basal phosphorylation on Ser-200 and Ser-404 is increased in response to progesterone and can be phosphorylated in vitro by the CDK2-A1 complex. Increased levels of phosphorylation on Ser-404 also in the presence of EGF, heregulin, IGF, PMA and FBS. Phosphorylation at this site by CDK2 is ligand-independent, and increases nuclear translocation and transcriptional activity. Phosphorylation at Ser-303, but not at Ser-200, is impaired during the G(2)/M phase of the cell cycle. Phosphorylation on Ser-349 by ERK1/2 MAPK is required for interaction with SP1. Post-translationally, sumoylation is hormone-dependent and represses transcriptional activity. Sumoylation on all three sites is enhanced by PIAS3. Desumoylated by SENP1. Sumoylation on Lys-392, the main site of sumoylation, is repressed by ubiquitination on the same site, and modulated by phosphorylation at Ser-303. Ubiquitination is hormone-dependent and represses sumoylation on the same site. Promoted by MAPK-mediated phosphorylation on Ser-303. In terms of processing, palmitoylated by ZDHHC7 and ZDHHC21. Palmitoylation is required for plasma membrane targeting and for rapid intracellular signaling via ERK and AKT kinases and cAMP generation. Expressed in mammary gland and uterus.

It is found in the nucleus. The protein resides in the cytoplasm. Its function is as follows. The steroid hormones and their receptors are involved in the regulation of eukaryotic gene expression and affect cellular proliferation and differentiation in target tissues. Depending on the isoform, progesterone receptor functions as a transcriptional activator or repressor. Ligand-dependent transdominant repressor of steroid hormone receptor transcriptional activity including repression of its isoform B, MR and ER. Transrepressional activity may involve recruitment of corepressor NCOR2. Functionally, transcriptional activator of several progesteron-dependent promoters in a variety of cell types. Involved in activation of SRC-dependent MAPK signaling on hormone stimulation. The sequence is that of Progesterone receptor (PGR) from Canis lupus familiaris (Dog).